The following is a 185-amino-acid chain: Ribosome-recycling factor (185 aa).

The protein belongs to the RRF family.

It is found in the cytoplasm. Functionally, responsible for the release of ribosomes from messenger RNA at the termination of protein biosynthesis. May increase the efficiency of translation by recycling ribosomes from one round of translation to another. The protein is Ribosome-recycling factor of Neorickettsia sennetsu (strain ATCC VR-367 / Miyayama) (Ehrlichia sennetsu).